The primary structure comprises 438 residues: GDP-mannose 6-dehydrogenase (438 aa).

NAD(+) is bound by residues Y10, V11, D30, K35, T86, and T124. GDP-alpha-D-mannuronate contacts are provided by E161, K210, N214, H217, N225, Y256, Y257, R259, F262, and G265. C268 is an active-site residue. Residue K271 participates in NAD(+) binding. Residue K324 coordinates GDP-alpha-D-mannuronate. R331 lines the NAD(+) pocket.

Belongs to the UDP-glucose/GDP-mannose dehydrogenase family.

The enzyme catalyses GDP-alpha-D-mannose + 2 NAD(+) + H2O = GDP-alpha-D-mannuronate + 2 NADH + 3 H(+). Its pathway is glycan biosynthesis; alginate biosynthesis. In terms of biological role, catalyzes the oxidation of guanosine diphospho-D-mannose (GDP-D-mannose) to GDP-D-mannuronic acid, a precursor for alginate polymerization. The alginate layer causes a mucoid phenotype and provides a protective barrier against host immune defenses and antibiotics. This chain is GDP-mannose 6-dehydrogenase (algD), found in Pseudomonas savastanoi pv. phaseolicola (Pseudomonas syringae pv. phaseolicola).